The chain runs to 896 residues: Androgen receptor (896 aa).

The modulating stretch occupies residues methionine 1–lysine 534. The interaction with ZNF318 stretch occupies residues methionine 1–alanine 563. Disordered regions lie at residues glutamine 35–leucine 152 and leucine 178–glycine 218. The segment covering leucine 54–glutamate 78 has biased composition (low complexity). Serine 65 bears the Phosphoserine; by CDK9 mark. At serine 81 the chain carries Phosphoserine. Residues leucine 178–glutamine 189 are compositionally biased toward low complexity. Residues glutamate 190 to glycine 199 show a composition bias toward polar residues. Tyrosine 215 is modified (phosphotyrosine; by CSK). Serine 248 bears the Phosphoserine mark. The residue at position 259 (tyrosine 259) is a Phosphotyrosine; by CSK and TNK2. Residues tyrosine 299, tyrosine 338, tyrosine 349, and tyrosine 354 each carry the phosphotyrosine; by CSK modification. A Phosphotyrosine; by CSK and TNK2 modification is found at tyrosine 355. Lysine 378 participates in a covalent cross-link: Glycyl lysine isopeptide (Lys-Gly) (interchain with G-Cter in SUMO). Phosphotyrosine; by CSK is present on tyrosine 385. Lysine 497 participates in a covalent cross-link: Glycyl lysine isopeptide (Lys-Gly) (interchain with G-Cter in SUMO). Phosphotyrosine; by CSK occurs at positions 511 and 528. Residues tyrosine 528–threonine 895 form an interaction with LPXN region. Positions threonine 535–leucine 608 form a DNA-binding region, nuclear receptor. 2 NR C4-type zinc fingers span residues cysteine 536–cysteine 556 and cysteine 572–cysteine 596. The interval tyrosine 548–valine 638 is interaction with HIPK3. Positions glutamine 568–threonine 895 are interaction with CCAR1. The segment at methionine 601–threonine 895 is interaction with KAT7. Serine 627 is modified (phosphoserine; by STK4/MST1). One can recognise an NR LBD domain in the interval glutamate 645 to isoleucine 876. 17beta-hydroxy-5alpha-androstan-3-one-binding residues include asparagine 682 and arginine 729. Glycyl lysine isopeptide (Lys-Gly) (interchain with G-Cter in ubiquitin) cross-links involve residues lysine 822 and lysine 824. Threonine 854 provides a ligand contact to 17beta-hydroxy-5alpha-androstan-3-one. At tyrosine 892 the chain carries Phosphotyrosine; by CSK.

The protein belongs to the nuclear hormone receptor family. NR3 subfamily. In terms of assembly, binds DNA as a homodimer. Part of a ternary complex containing AR, EFCAB6/DJBP and PARK7. Interacts with HIPK3 and NR0B2 in the presence of androgen. The ligand binding domain interacts with KAT7/HBO1 in the presence of dihydrotestosterone. Interacts with EFCAB6/DJBP, PQBP1, RANBP9, RBAK, SPDEF, SRA1, TGFB1I1 and RREB1. Interacts with ZMIZ1/ZIMP10 and ZMIZ2/ZMIP7 which both enhance its transactivation activity. Interacts with SLC30A9 and RAD54L2/ARIP4. Interacts with MACROD1 (via macro domain). Interacts via the ligand-binding domain with LXXLL and FXXLF motifs from NCOA1, NCOA2, NCOA3 and MAGEA11. Interacts (via nuclear receptor DNA binding domain and nuclear receptor ligand binding domain) with NCOA4. The AR N-terminal poly-Gln region binds Ran resulting in enhancement of AR-mediated transactivation. Ran-binding decreases as the poly-Gln length increases. Interacts with HIP1 (via coiled coil domain). Interacts (via ligand-binding domain) with TRIM68. Interacts with TNK2. Interacts with USP26. Interacts with RNF6. Interacts (regulated by RNF6 probably through polyubiquitination) with RNF14; regulates AR transcriptional activity. Interacts with PRMT2 and TRIM24. Interacts with RACK1. Interacts with RANBP10; this interaction enhances dihydrotestosterone-induced AR transcriptional activity. Interacts with PRPF6 in a hormone-independent way; this interaction enhances dihydrotestosterone-induced AR transcriptional activity. Interacts with STK4/MST1. Interacts with ZIPK/DAPK3. Interacts with LPXN. Interacts with MAK. Part of a complex containing AR, MAK and NCOA3. Interacts with CRY1. Interacts with CCAR1 and GATA2. Interacts with ZNF318. Interacts with BUD31. Interacts with ARID4A. Interacts with ARID4B. Interacts (via NR LBD domain) with ZBTB7A; the interaction is direct and androgen-dependent. Interacts with NCOR1. Interacts with NCOR2. Interacts with CRY2 in a ligand-dependent manner. Phosphorylated in prostate cancer cells in response to several growth factors including EGF. Phosphorylation is induced by c-Src kinase (CSK). Tyr-511 is one of the major phosphorylation sites and an increase in phosphorylation and Src kinase activity is associated with prostate cancer progression. Phosphorylation by TNK2 enhances the DNA-binding and transcriptional activity. Phosphorylation at Ser-65 by CDK9 regulates AR promoter selectivity and cell growth. Post-translationally, sumoylated on Lys-378 (major) and Lys-497. Ubiquitinated. Deubiquitinated by USP26. 'Lys-6' and 'Lys-27'-linked polyubiquitination by RNF6 modulates AR transcriptional activity and specificity. In terms of processing, palmitoylated by ZDHHC7 and ZDHHC21. Palmitoylation is required for plasma membrane targeting and for rapid intracellular signaling via ERK and AKT kinases and cAMP generation.

It is found in the nucleus. Its subcellular location is the cytoplasm. Steroid hormone receptors are ligand-activated transcription factors that regulate eukaryotic gene expression and affect cellular proliferation and differentiation in target tissues. Transcription factor activity is modulated by bound coactivator and corepressor proteins like ZBTB7A that recruits NCOR1 and NCOR2 to the androgen response elements/ARE on target genes, negatively regulating androgen receptor signaling and androgen-induced cell proliferation. Transcription activation is also down-regulated by NR0B2. Activated, but not phosphorylated, by HIPK3 and ZIPK/DAPK3. The sequence is that of Androgen receptor (AR) from Sus scrofa (Pig).